Reading from the N-terminus, the 258-residue chain is Small ribosomal subunit protein uS2 (258 aa).

The protein belongs to the universal ribosomal protein uS2 family.

The chain is Small ribosomal subunit protein uS2 from Streptococcus suis (strain 98HAH33).